The sequence spans 388 residues: G2/mitotic-specific cyclin-B (388 aa).

Belongs to the cyclin family. Cyclin AB subfamily. In terms of assembly, interacts with the CDK1 protein kinase to form a serine/threonine kinase holoenzyme complex also known as maturation promoting factor (MPF). The cyclin subunit imparts substrate specificity to the complex.

Its function is as follows. Essential for the control of the cell cycle at the G2/M (mitosis) transition. The polypeptide is G2/mitotic-specific cyclin-B (Marthasterias glacialis (Spiny starfish)).